The primary structure comprises 264 residues: Apolipoprotein A-I (264 aa).

Residues 1–18 form the signal peptide; that stretch reads MKTVVLAVAVLFLTGSQA. 2 tandem repeats follow at residues 67 to 88 and 89 to 110. A 10 X approximate tandem repeats region spans residues 67 to 264; that stretch reads LNLLENWDTL…EEASKKLNAQ (198 aa). At Met109 the chain carries Methionine sulfoxide. The stretch at 111–121 is one 3; half-length repeat; sequence KDLEEVKAKVQ. Tandem repeats lie at residues 122 to 143, 144 to 165, 166 to 187, 188 to 207, and 208 to 229. Met193 carries the post-translational modification Methionine sulfoxide. The 9; half-length repeat unit spans residues 230-240; it reads PALEDLRQGLM. Met240 is subject to Methionine sulfoxide. Residues 241 to 264 form repeat 10; that stretch reads PVFESFKTRIMSMVEEASKKLNAQ.

It belongs to the apolipoprotein A1/A4/E family. In terms of assembly, homodimer. Interacts with APOA1BP and CLU. Component of a sperm activating protein complex (SPAP), consisting of APOA1, an immunoglobulin heavy chain, an immunoglobulin light chain and albumin. Interacts with NDRG1. Interacts with SCGB3A2. Interacts with NAXE and YJEFN3. Glycosylated. In terms of processing, palmitoylated. Post-translationally, phosphorylation sites are present in the extracellular medium. In terms of tissue distribution, major protein of plasma HDL, also found in chylomicrons.

It is found in the secreted. Its function is as follows. Participates in the reverse transport of cholesterol from tissues to the liver for excretion by promoting cholesterol efflux from tissues and by acting as a cofactor for the lecithin cholesterol acyltransferase (LCAT). As part of the SPAP complex, activates spermatozoa motility. The polypeptide is Apolipoprotein A-I (APOAI) (Mesocricetus auratus (Golden hamster)).